The chain runs to 114 residues: Small ribosomal subunit protein bS6 (114 aa).

The protein belongs to the bacterial ribosomal protein bS6 family.

Functionally, binds together with bS18 to 16S ribosomal RNA. The sequence is that of Small ribosomal subunit protein bS6 from Phocaeicola vulgatus (strain ATCC 8482 / DSM 1447 / JCM 5826 / CCUG 4940 / NBRC 14291 / NCTC 11154) (Bacteroides vulgatus).